Here is a 524-residue protein sequence, read N- to C-terminus: Germ cell-less protein-like 1 (524 aa).

The interval M1–A37 is disordered. The Nuclear localization signal motif lies at G47 to S53. Residues D63–P83 are disordered. At S64 the chain carries Phosphoserine. Acidic residues predominate over residues E65 to D74. Position 66 is a phosphothreonine (T66). The Nuclear localization signal motif lies at P83 to K89. The 71-residue stretch at S106–P176 folds into the BTB domain.

In terms of assembly, interacts with TMPO-Beta, TSG101 and TFDP2. Interacts with EMD. As to expression, ubiquitously expressed at low levels throughout development and in adult tissues.

The protein resides in the nucleus matrix. In terms of biological role, possible function in spermatogenesis. Enhances the degradation of MDM2 and increases the amount of p53 probably by modulating the nucleocytoplasmic transport. The polypeptide is Germ cell-less protein-like 1 (Gmcl1) (Mus musculus (Mouse)).